The sequence spans 199 residues: Ribonuclease HII (199 aa).

Residues 14–199 (GLLAGVDEAG…SFAPVAEVLR (186 aa)) enclose the RNase H type-2 domain. 3 residues coordinate a divalent metal cation: Asp20, Glu21, and Asp112.

This sequence belongs to the RNase HII family. Mn(2+) serves as cofactor. Mg(2+) is required as a cofactor.

It is found in the cytoplasm. It catalyses the reaction Endonucleolytic cleavage to 5'-phosphomonoester.. Functionally, endonuclease that specifically degrades the RNA of RNA-DNA hybrids. In Polaromonas sp. (strain JS666 / ATCC BAA-500), this protein is Ribonuclease HII.